Here is a 190-residue protein sequence, read N- to C-terminus: Adenine phosphoribosyltransferase (190 aa).

This sequence belongs to the purine/pyrimidine phosphoribosyltransferase family. In terms of assembly, homodimer.

It is found in the cytoplasm. The catalysed reaction is AMP + diphosphate = 5-phospho-alpha-D-ribose 1-diphosphate + adenine. It participates in purine metabolism; AMP biosynthesis via salvage pathway; AMP from adenine: step 1/1. Its function is as follows. Catalyzes a salvage reaction resulting in the formation of AMP, that is energically less costly than de novo synthesis. This Cupriavidus necator (strain ATCC 17699 / DSM 428 / KCTC 22496 / NCIMB 10442 / H16 / Stanier 337) (Ralstonia eutropha) protein is Adenine phosphoribosyltransferase.